The sequence spans 36 residues: Insecticidal toxin LaIT1 (36 aa).

Cystine bridges form between Cys-11-Cys-23 and Cys-17-Cys-29.

Expressed by the venom gland.

The protein localises to the secreted. In terms of biological role, affects the activity of both ryanodine-sensitive calcium-release channels RyR1 and RyR2 with high potency. At lower concentrations the toxin increases full openings of the RyRs, and at higher concentrations it inhibits full openings and induce openings to subconductance levels and reduces the number of full conductance openings. The different actions may be attributed to the toxins binding at different sites on the RyRs, with binding at a high-affinity site mediating the increase in full openings and the induction of subconductance states evoked upon binding to a lower-affinity site. Shows insect lethality against crickets and common cutworms (only shows paralysis against cockroaches), but no toxicity is observed in mice. The polypeptide is Insecticidal toxin LaIT1 (Liocheles australasiae (Dwarf wood scorpion)).